The sequence spans 365 residues: Forkhead box protein H1 (365 aa).

Positions 1–29 (MGPCSGSRLGPPEAESPSQPPKRRKKRYL) are disordered. The fork-head DNA-binding region spans 32–128 (DKPPYTYLAM…ALRLQNTALC (97 aa)). Positions 151-215 (GRPYRPPSPP…TPPLPSSERP (65 aa)) are disordered. Residues 154–164 (YRPPSPPPPPS) show a composition bias toward pro residues. Positions 273–354 (LWGQLPTSYL…VSHPRDLAAP (82 aa)) are SMAD-interaction domain (SID). The Fast/FoxH1 motif 1 (FM1) motif lies at 277 to 281 (LPTSY). Positions 287 to 293 (PNVVMPL) match the Fast/FoxH1 motif 2 (FM2) motif. The SMAD interaction motif (SIM) signature appears at 327 to 348 (LDALFQGVPPNKSIYDVWVSHP).

In terms of assembly, interacts with the MH2 domains of SMAD2 and SMAD3. As to expression, ubiquitous.

The protein resides in the nucleus. Its function is as follows. Transcriptional activator. Recognizes and binds to the DNA sequence 5'-TGT[GT][GT]ATT-3'. Required for induction of the goosecoid (GSC) promoter by TGF-beta or activin signaling. Forms a transcriptionally active complex containing FOXH1/SMAD2/SMAD4 on a site on the GSC promoter called TARE (TGF-beta/activin response element). The protein is Forkhead box protein H1 (FOXH1) of Homo sapiens (Human).